The following is a 644-amino-acid chain: Putative aldehyde dehydrogenase-like protein YHR039C (644 aa).

A glycan (N-linked (GlcNAc...) asparagine) is linked at N15. E354 acts as the Proton acceptor in catalysis. The active-site Nucleophile is the C389. N-linked (GlcNAc...) asparagine glycosylation is found at N565 and N627.

The protein belongs to the aldehyde dehydrogenase family. In terms of processing, N-glycosylated.

It is found in the endoplasmic reticulum. The protein is Putative aldehyde dehydrogenase-like protein YHR039C (MSC7) of Saccharomyces cerevisiae (strain ATCC 204508 / S288c) (Baker's yeast).